The primary structure comprises 583 residues: Threonine--tRNA ligase (583 aa).

Residues 185–478 (DHRKLGRELN…LVEHYGGAFP (294 aa)) are catalytic. Zn(2+) is bound by residues Cys278, His329, and His455.

This sequence belongs to the class-II aminoacyl-tRNA synthetase family. Homodimer. The cofactor is Zn(2+).

The protein localises to the cytoplasm. The enzyme catalyses tRNA(Thr) + L-threonine + ATP = L-threonyl-tRNA(Thr) + AMP + diphosphate + H(+). In terms of biological role, catalyzes the attachment of threonine to tRNA(Thr) in a two-step reaction: L-threonine is first activated by ATP to form Thr-AMP and then transferred to the acceptor end of tRNA(Thr). Also edits incorrectly charged L-seryl-tRNA(Thr). In Borrelia recurrentis (strain A1), this protein is Threonine--tRNA ligase.